The primary structure comprises 142 residues: Large-conductance mechanosensitive channel (142 aa).

2 consecutive transmembrane segments (helical) span residues 14–34 and 82–102; these read VMDL…VDSV and GNFI…FLLI.

The protein belongs to the MscL family. In terms of assembly, homopentamer.

Its subcellular location is the cell inner membrane. Functionally, channel that opens in response to stretch forces in the membrane lipid bilayer. May participate in the regulation of osmotic pressure changes within the cell. The sequence is that of Large-conductance mechanosensitive channel from Sinorhizobium medicae (strain WSM419) (Ensifer medicae).